The primary structure comprises 661 residues: CD180 antigen (661 aa).

An N-terminal signal peptide occupies residues 1–20; it reads MAPDISCFFLVALFLASCRA. The Extracellular portion of the chain corresponds to 21–626; the sequence is TTSSDQKCIE…RLSDVTLSCS (606 aa). Positions 33–53 constitute an LRRNT domain; sequence VNKTYNCENLGLNEIPGTLPN. N-linked (GlcNAc...) asparagine glycans are attached at residues Asn34, Asn53, Asn70, and Asn78. LRR repeat units lie at residues 54–75, 78–99, 102–123, 126–147, 150–171, 174–195, and 201–221; these read STEC…TFSR, NLTF…TFQS, RLDT…ALSG, ALKH…PLHN, TLES…KGFP, KLKV…DMSS, and NLSL…AFDS. 3 N-linked (GlcNAc...) asparagine glycosylation sites follow: Asn201, Asn244, and Asn288. LRR repeat units lie at residues 275 to 296, 299 to 321, 322 to 343, 346 to 366, and 371 to 391; these read SVES…TFHC, GLQE…VGLS, TLKK…SASN, SLTH…TGCL, and NLRE…CNLQ. N-linked (GlcNAc...) asparagine glycosylation is found at Asn394 and Asn402. LRR repeat units follow at residues 397–418, 421–442, 446–466, 470–493, 497–518, 521–544, and 546–566; these read HLQS…AFKE, QLEL…SPFQ, LLKV…QLFD, ALQH…NSLQ, RLEI…AFTS, MMNH…SHLK, and IYLN…LPIL. The N-linked (GlcNAc...) asparagine glycan is linked to Asn451. Positions 577 to 627 constitute an LRRCT domain; sequence NPLDCTCSNIYFLEWYKENMQKLEDTEDTLCENPPLLRGVRLSDVTLSCSM. Residues 627-650 form a helical membrane-spanning segment; sequence MAAVGIFFLIVFLLVFAILLIFAV. Topologically, residues 651-661 are cytoplasmic; the sequence is KYFLRWKYQHI.

This sequence belongs to the Toll-like receptor family. In terms of assembly, M-shaped tetramer of two CD180-LY86 heterodimers. B-lymphocytes and spleen. Not detected in thymus, kidney, muscle, heart, brain or liver.

The protein localises to the cell membrane. In terms of biological role, may cooperate with MD-1 and TLR4 to mediate the innate immune response to bacterial lipopolysaccharide (LPS) in B-cells. Leads to NF-kappa-B activation. Also involved in the life/death decision of B-cells. In Mus musculus (Mouse), this protein is CD180 antigen (Cd180).